The chain runs to 171 residues: Photosystem I assembly protein Ycf3 (171 aa).

TPR repeat units follow at residues alanine 35–proline 68, serine 72–leucine 105, and glycine 120–asparagine 153.

Belongs to the Ycf3 family.

It localises to the plastid. The protein resides in the chloroplast thylakoid membrane. Its function is as follows. Essential for the assembly of the photosystem I (PSI) complex. May act as a chaperone-like factor to guide the assembly of the PSI subunits. In Angiopteris evecta (Mule's foot fern), this protein is Photosystem I assembly protein Ycf3.